The sequence spans 113 residues: U11-theraphotoxin-Hhn1s (113 aa).

The signal sequence occupies residues 1 to 21; the sequence is MNTVRVTFLLVFVLAVSLGQA. The propeptide occupies 22–74; the sequence is DKDENRMEMQEKTEQGKSYLDFAENLLLQKLEELEAKLLEEDSEESRNSRQKR. Residues 61–83 form a disordered region; that stretch reads EEDSEESRNSRQKRCIGEGVPCD. Cystine bridges form between cysteine 75–cysteine 90, cysteine 82–cysteine 95, and cysteine 89–cysteine 110.

The protein belongs to the neurotoxin 14 (magi-1) family. 01 (HNTX-16) subfamily. Expressed by the venom gland.

The protein resides in the secreted. Functionally, probable ion channel inhibitor. In Cyriopagopus hainanus (Chinese bird spider), this protein is U11-theraphotoxin-Hhn1s.